The following is a 376-amino-acid chain: Chorismate synthase (376 aa).

Positions 39 and 45 each coordinate NADP(+). Residues 115-117 (RSS), G276, 291-295 (KPIPT), and R317 contribute to the FMN site.

Belongs to the chorismate synthase family. In terms of assembly, homotetramer. FMNH2 is required as a cofactor.

The catalysed reaction is 5-O-(1-carboxyvinyl)-3-phosphoshikimate = chorismate + phosphate. It functions in the pathway metabolic intermediate biosynthesis; chorismate biosynthesis; chorismate from D-erythrose 4-phosphate and phosphoenolpyruvate: step 7/7. In terms of biological role, catalyzes the anti-1,4-elimination of the C-3 phosphate and the C-6 proR hydrogen from 5-enolpyruvylshikimate-3-phosphate (EPSP) to yield chorismate, which is the branch point compound that serves as the starting substrate for the three terminal pathways of aromatic amino acid biosynthesis. This reaction introduces a second double bond into the aromatic ring system. In Thermotoga maritima (strain ATCC 43589 / DSM 3109 / JCM 10099 / NBRC 100826 / MSB8), this protein is Chorismate synthase.